The sequence spans 334 residues: GTPase Obg (334 aa).

Residues 1-159 (MRFVDEVVIK…KEVRLELNLL (159 aa)) form the Obg domain. One can recognise an OBG-type G domain in the interval 160-331 (ADVALLGLPN…LAKKLNEFLQ (172 aa)). GTP contacts are provided by residues 166–173 (GLPNAGKS), 191–195 (FTTMY), 212–215 (DIPG), 282–285 (NKID), and 312–314 (SAA). Residues Ser-173 and Thr-193 each contribute to the Mg(2+) site.

Belongs to the TRAFAC class OBG-HflX-like GTPase superfamily. OBG GTPase family. Monomer. Requires Mg(2+) as cofactor.

It is found in the cytoplasm. Functionally, an essential GTPase which binds GTP, GDP and possibly (p)ppGpp with moderate affinity, with high nucleotide exchange rates and a fairly low GTP hydrolysis rate. Plays a role in control of the cell cycle, stress response, ribosome biogenesis and in those bacteria that undergo differentiation, in morphogenesis control. The chain is GTPase Obg from Francisella tularensis subsp. mediasiatica (strain FSC147).